The chain runs to 368 residues: tRNA-specific 2-thiouridylase MnmA (368 aa).

ATP is bound by residues 12–19 (GMSGGVDS) and M38. Residues 98 to 100 (NPD) form an interaction with target base in tRNA region. Residue C103 is the Nucleophile of the active site. C103 and C200 are joined by a disulfide. G128 lines the ATP pocket. An interaction with tRNA region spans residues 150–152 (KDQ). C200 serves as the catalytic Cysteine persulfide intermediate. An interaction with tRNA region spans residues 313–314 (RY).

Belongs to the MnmA/TRMU family. In terms of assembly, interacts with TusE.

The protein resides in the cytoplasm. It catalyses the reaction S-sulfanyl-L-cysteinyl-[protein] + uridine(34) in tRNA + AH2 + ATP = 2-thiouridine(34) in tRNA + L-cysteinyl-[protein] + A + AMP + diphosphate + H(+). Its function is as follows. Catalyzes the 2-thiolation of uridine at the wobble position (U34) of tRNA(Lys), tRNA(Glu) and tRNA(Gln), leading to the formation of s(2)U34, the first step of tRNA-mnm(5)s(2)U34 synthesis. Sulfur is provided by IscS, via a sulfur-relay system. Binds ATP and its substrate tRNAs. In Pectobacterium carotovorum subsp. carotovorum (strain PC1), this protein is tRNA-specific 2-thiouridylase MnmA.